A 227-amino-acid polypeptide reads, in one-letter code: Protein GET1 (227 aa).

Topologically, residues 1-3 (MSL) are lumenal. A helical membrane pass occupies residues 4 to 23 (LLTVFLIVFVTQLISWIGQN). At 24–107 (VLLEWAYNLY…SFSTKFNAVI (84 aa)) the chain is on the cytoplasmic side. A coiled-coil region spans residues 72–96 (AKLRRSVDKGLAELEKLNSEIATAK). A helical transmembrane segment spans residues 108–128 (WALTSGVNLVIGWWYGRKAVF). The Lumenal segment spans residues 129-151 (YLPEGWMGPLTWWFSFPFAPRGS). Residues 152 to 168 (VSVGVWSFACKRVLLVL) traverse the membrane as a helical segment. Residues 169–227 (ERMVKELFFAETQAKEVPVGFSPSSSSSSTPNPMSKASSGSPSPRRRTTVTVESEDEKS) are Cytoplasmic-facing. The interval 184 to 227 (EVPVGFSPSSSSSSTPNPMSKASSGSPSPRRRTTVTVESEDEKS) is disordered. Over residues 190-211 (SPSSSSSSTPNPMSKASSGSPS) the composition is skewed to low complexity.

It belongs to the WRB/GET1 family. As to quaternary structure, interacts with GET3.

It localises to the endoplasmic reticulum membrane. Functionally, required for the post-translational delivery of tail-anchored (TA) proteins to the endoplasmic reticulum. Acts as a membrane receptor for soluble GET3, which recognizes and selectively binds the transmembrane domain of TA proteins in the cytosol. This Coprinopsis cinerea (strain Okayama-7 / 130 / ATCC MYA-4618 / FGSC 9003) (Inky cap fungus) protein is Protein GET1.